Consider the following 490-residue polypeptide: Cytochrome P450 90D2 (490 aa).

The helical transmembrane segment at 4 to 24 (AAAGWAAPAFAVAAVVIWVVL) threads the bilayer. Cys-437 contributes to the heme binding site.

This sequence belongs to the cytochrome P450 family. Heme is required as a cofactor.

The protein localises to the membrane. The catalysed reaction is 6-deoxoteasterone + reduced [NADPH--hemoprotein reductase] + O2 = 3-dehydro-6-deoxoteasterone + oxidized [NADPH--hemoprotein reductase] + 2 H2O + H(+). Its pathway is plant hormone biosynthesis; brassinosteroid biosynthesis. In terms of biological role, catalyzes the C6-oxidation step in brassinosteroids biosynthesis. May convert 6-deoxoteasterone (6-deoxoTE) to 3-dehydro-6-deoxoteasterone (6-deoxo3DT, 6-deoxo3DHT), and teasterone (TE) to 3-dehydroteasterone (3DT, 3-DHT). Involved in the elongation of leaf sheaths and stems. The protein is Cytochrome P450 90D2 of Oryza sativa subsp. indica (Rice).